The primary structure comprises 227 residues: MRSPFPVPMVPLTIKTWQKKLPNWLTIYRIFIAVPTIIFLGLNHLLGSVASFTVLGNVTIHLQVSLFIGGVLFITAVISDYLDGYWARKWRVVSNFGKLWDPLADKVIINGVLIALVAYGYFHFSFLIVIVLRDLVLDGLRFYAQEKQLIIPANQWGKWKTTWQMIAILMSCFVFSFSLKETNSANTKIFYWAIVHLPYYLATAFSLVSFGIYAQQIYKTIKVKVKL.

Helical transmembrane passes span 30-50, 58-78, 112-132, 159-179, and 192-212; these read IFIAVPTIIFLGLNHLLGSVA, VTIHLQVSLFIGGVLFITAVI, VLIALVAYGYFHFSFLIVIVL, WKTTWQMIAILMSCFVFSFSL, and WAIVHLPYYLATAFSLVSFGI.

Belongs to the CDP-alcohol phosphatidyltransferase class-I family.

The protein resides in the cell membrane. It carries out the reaction a CDP-1,2-diacyl-sn-glycerol + sn-glycerol 3-phosphate = a 1,2-diacyl-sn-glycero-3-phospho-(1'-sn-glycero-3'-phosphate) + CMP + H(+). Its pathway is phospholipid metabolism; phosphatidylglycerol biosynthesis; phosphatidylglycerol from CDP-diacylglycerol: step 1/2. Its function is as follows. This protein catalyzes the committed step to the synthesis of the acidic phospholipids. This is CDP-diacylglycerol--glycerol-3-phosphate 3-phosphatidyltransferase (pgsA) from Mycoplasma pneumoniae (strain ATCC 29342 / M129 / Subtype 1) (Mycoplasmoides pneumoniae).